The chain runs to 217 residues: Ras-related protein Rab-39A (217 aa).

GTP is bound by residues serine 17, glycine 20, lysine 21, serine 22, cysteine 23, and threonine 44. Serine 22 serves as a coordination point for Mg(2+). Residues 39–47 (PACDPTVGV) form a switch-I region. Residues threonine 44 and aspartate 68 each contribute to the Mg(2+) site. Residues glycine 71, histidine 127, lysine 128, aspartate 130, alanine 158, and lysine 159 each coordinate GTP. Residues 71–87 (GQERFRSITRSYYRNSV) are switch-II. Residues cysteine 215 and cysteine 217 are each lipidated (S-geranylgeranyl cysteine). The residue at position 217 (cysteine 217) is a Cysteine methyl ester.

This sequence belongs to the small GTPase superfamily. Rab family. Interacts (GDP-bound) with C9orf72; C9orf72 acts as a GEF for RAB39A. Interacts (GTP-bound) with HOPS complex components VPS39 and VPS41, and STX17; interaction between HOPS components and RAB39A contributes to obtaining a functional HOPS complex that promotes membrane fusion driven by STX17-SNAP29-VAMP8. Interacts with BECN1. Probably associates with the PI3K (PI3KC3/PI3K-III/class III phosphatidylinositol 3-kinase) complex. Interacts with UACA. Interacts with isoform a of RASSF1. Does not interact with isoform c of RASSF1. Mg(2+) serves as cofactor. In terms of processing, prenylated. Prenylation is required for association with cellular membranes.

It localises to the cell membrane. The protein resides in the cytoplasmic vesicle. The protein localises to the phagosome membrane. It is found in the lysosome membrane. Its subcellular location is the autolysosome membrane. It catalyses the reaction GTP + H2O = GDP + phosphate + H(+). With respect to regulation, regulated by guanine nucleotide exchange factors (GEFs) including c9Orf72, which promote the exchange of bound GDP for free GTP. Regulated by GTPase activating proteins (GAPs) which increase the GTP hydrolysis activity. Inhibited by GDP dissociation inhibitors (GDIs). Functionally, the small GTPases Rab are key regulators of intracellular membrane trafficking, from the formation of transport vesicles to their fusion with membranes. Rabs cycle between an inactive GDP-bound form and an active GTP-bound form that is able to recruit to membranes different sets of downstream effectors directly responsible for vesicle formation, movement, tethering and fusion. RAB39A regulates autophagosome-lysosome fusion via recruitment of the HOPS endosomal tethering complex onto lysosomes; this process involves lysosomal RAB39A and autophagosomal RAB2A recruitment of HOPS subcomplexes VPS41-VPS16-VPS18-VPS33A and VPS39-VPS11, respectively, which assemble into a functional complex to mediate membrane tethering and SNAREs-driven membrane fusion. Also negatively regulates lipopolysaccharide (LPS)-induced autophagosome formation in macrophages, possibly by implicating PI3K. Promotes the delivery of MHC-I molecules from the ER to phagosomes and the generation of peptide-loaded MHC-I complexes in phagosomes, thus enhancing antigen cross-presentation by dendritic cells. Plays a role in the maturation and acidification of phagosomes that engulf pathogens, such as S.aureus and M.tuberculosis. Plays a role in the fusion of phagosomes with lysosomes. May be involved in multiple neurite formation. This Homo sapiens (Human) protein is Ras-related protein Rab-39A.